We begin with the raw amino-acid sequence, 1006 residues long: Transmembrane channel-like protein 5 (1006 aa).

Residues 1 to 289 are disordered; the sequence is MSAYYRNNWS…DDPVGSLWGE (289 aa). The Extracellular portion of the chain corresponds to 1 to 458; sequence MSAYYRNNWS…YFNFLRWLLK (458 aa). Polar residues-rich tracts occupy residues 20–30, 50–59, and 76–101; these read SGSQNRTQGYL, TRSNPYSVAS, and RSLS…SPDH. Over residues 138–149 the composition is skewed to low complexity; the sequence is AGSSSSGNYAGS. Over residues 239-250 the composition is skewed to basic and acidic residues; the sequence is REPDYSDAENGH. The helical transmembrane segment at 459 to 479 threads the bilayer; it reads FNIFSFILNFSFIIIPQFTVA. Over 480 to 485 the chain is Cytoplasmic; sequence KKNTLQ. Residues 486 to 508 traverse the membrane as a helical segment; that stretch reads FTGLEFFTGVGYFRDTVMYYGFY. The Extracellular segment spans residues 509 to 525; that stretch reads TNSTIQHGNSGASYNMQ. A helical membrane pass occupies residues 526–546; it reads LAYIFTIGACLTTCFFSLLFS. Residues 547–619 are Cytoplasmic-facing; sequence MAKYFRNNFI…NQLLTRFSAY (73 aa). Residues 620–640 form a helical membrane-spanning segment; it reads MVAWVVSTGVAIACCAAVYYL. Over 641–654 the chain is Extracellular; the sequence is AEYNLEFLKTHSNP. A helical membrane pass occupies residues 655–675; sequence GAVLLLPFVVSCINLAVPCIY. The Cytoplasmic segment spans residues 676 to 698; the sequence is SMFRLVERYEMPRHEVYVLLIRN. Residues 699–719 traverse the membrane as a helical segment; it reads IFLKISIIGILCYYWLNTVAL. At 720 to 732 the chain is on the extracellular side; it reads SGEECWETLIGQD. The helical transmembrane segment at 733–753 threads the bilayer; the sequence is IYRLLLMDFVFSLVNSFLGEF. At 754 to 786 the chain is on the cytoplasmic side; sequence LRRIIGMQLITSLGLQEFDIARNVLELIYAQTL. A helical transmembrane segment spans residues 787–807; it reads VWIGIFFCPLLPFIQMIMLFI. The Extracellular portion of the chain corresponds to 808–835; sequence MFYSKNISLMMNFQPPSKAWRASQMMTF. The chain crosses the membrane as a helical span at residues 836–856; it reads FIFLLFFPSFTGVLCTLAITI. At 857-900 the chain is on the cytoplasmic side; that stretch reads WRLKPSADCGPFRGLPLFIHSIYSWIDTLSTRPGYLWVVWIYRN. Residues 901–921 traverse the membrane as a helical segment; sequence LIGSVHFFFILTLIVLIITYL. At 922-1006 the chain is on the extracellular side; the sequence is YWQITEGRKI…RSVQEGNPRA (85 aa).

This sequence belongs to the TMC family.

It is found in the membrane. Its function is as follows. Probable component of an ion channel. Molecular function hasn't been characterized yet. This is Transmembrane channel-like protein 5 from Homo sapiens (Human).